A 630-amino-acid chain; its full sequence is tRNA uridine 5-carboxymethylaminomethyl modification enzyme MnmG (630 aa).

13-18 (GGGHAG) is a binding site for FAD. 273–287 (GPRYCPSIEDKIHRF) provides a ligand contact to NAD(+).

The protein belongs to the MnmG family. Homodimer. Heterotetramer of two MnmE and two MnmG subunits. Requires FAD as cofactor.

The protein localises to the cytoplasm. In terms of biological role, NAD-binding protein involved in the addition of a carboxymethylaminomethyl (cmnm) group at the wobble position (U34) of certain tRNAs, forming tRNA-cmnm(5)s(2)U34. The polypeptide is tRNA uridine 5-carboxymethylaminomethyl modification enzyme MnmG (Pseudomonas aeruginosa (strain ATCC 15692 / DSM 22644 / CIP 104116 / JCM 14847 / LMG 12228 / 1C / PRS 101 / PAO1)).